Consider the following 175-residue polypeptide: Calcineurin subunit B (175 aa).

4 EF-hand domains span residues D21–P56, R60–R88, S90–S125, and Q131–A166. Ca(2+) contacts are provided by D34, D36, S38, S40, E45, D66, D68, S70, D72, E77, D103, D105, D107, E114, D144, D146, D148, Q150, and E155.

This sequence belongs to the calcineurin regulatory subunit family. Composed of a catalytic subunit (A) and a regulatory subunit (B).

In terms of biological role, regulatory subunit of calcineurin, a calcium-dependent, calmodulin stimulated protein phosphatase. Confers calcium sensitivity. The polypeptide is Calcineurin subunit B (CNB1) (Candida glabrata (strain ATCC 2001 / BCRC 20586 / JCM 3761 / NBRC 0622 / NRRL Y-65 / CBS 138) (Yeast)).